A 276-amino-acid polypeptide reads, in one-letter code: Undecaprenyl-diphosphatase (276 aa).

The next 7 membrane-spanning stretches (helical) occupy residues 48-68 (AANS…AIVF), 92-112 (LTIA…FLFE), 119-139 (LFSV…MLIA), 155-175 (ITYK…WPGF), 196-216 (ADFT…LKLV), 229-249 (FFLV…KFFL), and 255-275 (IKLV…IMLV).

The protein belongs to the UppP family.

The protein resides in the cell membrane. The enzyme catalyses di-trans,octa-cis-undecaprenyl diphosphate + H2O = di-trans,octa-cis-undecaprenyl phosphate + phosphate + H(+). Functionally, catalyzes the dephosphorylation of undecaprenyl diphosphate (UPP). Confers resistance to bacitracin. This chain is Undecaprenyl-diphosphatase, found in Bacillus velezensis (strain DSM 23117 / BGSC 10A6 / LMG 26770 / FZB42) (Bacillus amyloliquefaciens subsp. plantarum).